Reading from the N-terminus, the 190-residue chain is 3-isopropylmalate dehydratase small subunit (190 aa).

The protein belongs to the LeuD family. LeuD type 1 subfamily. Heterodimer of LeuC and LeuD.

The catalysed reaction is (2R,3S)-3-isopropylmalate = (2S)-2-isopropylmalate. It participates in amino-acid biosynthesis; L-leucine biosynthesis; L-leucine from 3-methyl-2-oxobutanoate: step 2/4. Functionally, catalyzes the isomerization between 2-isopropylmalate and 3-isopropylmalate, via the formation of 2-isopropylmaleate. The sequence is that of 3-isopropylmalate dehydratase small subunit from Staphylococcus aureus (strain JH1).